The chain runs to 548 residues: Rhodopsin kinase grk7-b (548 aa).

The residue at position 33 (serine 33) is a Phosphoserine; by PKA. The RGS domain occupies 53 to 172 (FEDICEQQPI…QTSLFFDRFV (120 aa)). The region spanning 187 to 446 (FYEFRTLGKG…NDDPRKHEFF (260 aa)) is the Protein kinase domain. Residues 193–201 (LGKGGFGEV) and lysine 216 each bind ATP. Aspartate 312 serves as the catalytic Proton acceptor. The region spanning 447 to 512 (KSINFPRLEA…GVVPIAWQQE (66 aa)) is the AGC-kinase C-terminal domain. The disordered stretch occupies residues 520-548 (DELSDPNRKESAAGLEDEEQQKSKSCTLL). At cysteine 545 the chain carries Cysteine methyl ester. Cysteine 545 carries the S-geranylgeranyl cysteine lipid modification. The propeptide at 546 to 548 (TLL) is removed in mature form.

This sequence belongs to the protein kinase superfamily. AGC Ser/Thr protein kinase family. GPRK subfamily. Post-translationally, phosphorylation at Ser-33 is regulated by light and activated by cAMP. In terms of tissue distribution, expressed in the eyes (at protein level). Expressed in the eyes, the pineal gland and in the brain.

Its subcellular location is the membrane. It catalyses the reaction L-threonyl-[rhodopsin] + ATP = O-phospho-L-threonyl-[rhodopsin] + ADP + H(+). The enzyme catalyses L-seryl-[rhodopsin] + ATP = O-phospho-L-seryl-[rhodopsin] + ADP + H(+). Retina-specific kinase involved in the shutoff of the photoresponse and adaptation to changing light conditions via cone opsin phosphorylation, including rhodopsin (RHO). This Danio rerio (Zebrafish) protein is Rhodopsin kinase grk7-b (grk7b).